Consider the following 976-residue polypeptide: MDHEGCQGQHPQQCCQWVSNAWSEFLDLLKNAETLDIVIMLLGYIAMHLTFVSLFLSMRKMGSKFWLGICTLFSSVFAFLFGLVVTTKLGVPISVILLSEGLPFLVVTIGFEKNIVLTRAVMSHAIEHRRIQAQNSKSGKRSPDGSTQNMIQYAVQAAIKEKGFEIIRDYAIEIVILVIGAASGVQGGLQQFCFLAAWTLFFDFILLFTFYTAILSIKLRSTVSSVMSICVWPLRMMASRRVAENVAKGDDELNRVRGDAPLFGRKSSSIPKFKVLMILGFIFVNIVNICSIPFRNPSSMSTIRTWASSLGGVIAPLSVDPFKVASNGLDAILPTAKSNNRPTLVTVLTPIKYELEYPSIHYALGSAASNPAYNDAFHHHFQGYGVGGRMVGGILKSLEDPVLSKWIVIALALSVALNGYLFNVARWGIKDPNVPEHNIDRNELARAREFNDTGSATLPLGEYVPPTPMRTQPSTPAITDDEAEGLHMTKARPANLPNRSNEELEKLLSENALREMTDEEVISLSMRGKIPGYALEKTLGDFTRAVKIRRSIIARNKAAADITHSLDRSKLPYENYNWERFFGACCENVIGYMPLPVGVAGPLVIDGQSYFIPMATTEGVLVASASRGCKAINSGGGAITVLTADGMTRGPCVAFETLERAGAAKLWLDSEAGQDMMKKAFNSTSRFARLQSMKTALAGTNLYIRFKTTTGDAMGMNMISKGVEHALSVMANDGGFDDMQIISVSGNYCTDKKAAALNWIDGRGKGVVAEAIIPGEVVRSVLKSDVDSLVELNVAKNLIGSAMAGSVGGFNAHAANIVAAIFLATGQDPAQVVESANCITIMKNLNGALQISVSMPSLEVGTLGGGTILEPQGAMLDILGVRGSHPTNPGDNARRLARIIGAAVLAGELSLCSALAAGHLVRAHMQHNRSAAPSRSTTPGSSHDARLTGHDQCPRALSVNNVDERRRYSEVKAIDE.

Over 1-36 (MDHEGCQGQHPQQCCQWVSNAWSEFLDLLKNAETLD) the chain is Lumenal. Residues 36 to 217 (DIVIMLLGYI…FTFYTAILSI (182 aa)) form the SSD domain. A helical transmembrane segment spans residues 37–57 (IVIMLLGYIAMHLTFVSLFLS). Topologically, residues 58 to 64 (MRKMGSK) are cytoplasmic. Residues 65–85 (FWLGICTLFSSVFAFLFGLVV) traverse the membrane as a helical segment. Over 86 to 90 (TTKLG) the chain is Lumenal. A helical transmembrane segment spans residues 91–111 (VPISVILLSEGLPFLVVTIGF). Residues 112–169 (EKNIVLTRAVMSHAIEHRRIQAQNSKSGKRSPDGSTQNMIQYAVQAAIKEKGFEIIRD) are Cytoplasmic-facing. Residues 170-190 (YAIEIVILVIGAASGVQGGLQ) traverse the membrane as a helical segment. The Lumenal portion of the chain corresponds to 191–193 (QFC). Residues 194 to 214 (FLAAWTLFFDFILLFTFYTAI) traverse the membrane as a helical segment. Residues 215-272 (LSIKLRSTVSSVMSICVWPLRMMASRRVAENVAKGDDELNRVRGDAPLFGRKSSSIPK) lie on the Cytoplasmic side of the membrane. Residues 273–293 (FKVLMILGFIFVNIVNICSIP) traverse the membrane as a helical segment. Over 294 to 401 (FRNPSSMSTI…GGILKSLEDP (108 aa)) the chain is Lumenal. Residues 402–422 (VLSKWIVIALALSVALNGYLF) form a helical membrane-spanning segment. Residues 423–976 (NVARWGIKDP…RYSEVKAIDE (554 aa)) lie on the Cytoplasmic side of the membrane. Glu618 serves as the catalytic Charge relay system. 624–630 (SASRGCK) is a binding site for CoA. NADP(+) is bound by residues 685–687 (SRF) and 712–720 (DAMGMNMIS). Lys752 serves as the catalytic Charge relay system. 781 to 783 (VLK) serves as a coordination point for CoA. The active-site Charge relay system is the Asp828. Position 923-924 (923-924 (AH)) interacts with CoA. The active-site Proton donor is the His924. Residues 926-954 (QHNRSAAPSRSTTPGSSHDARLTGHDQCP) are disordered. NADP(+) is bound at residue 928-929 (NR). Residues 928 to 941 (NRSAAPSRSTTPGS) show a composition bias toward polar residues. A compositionally biased stretch (basic and acidic residues) spans 943–953 (HDARLTGHDQC).

The protein belongs to the HMG-CoA reductase family.

Its subcellular location is the endoplasmic reticulum membrane. It catalyses the reaction (R)-mevalonate + 2 NADP(+) + CoA = (3S)-3-hydroxy-3-methylglutaryl-CoA + 2 NADPH + 2 H(+). Its pathway is metabolic intermediate biosynthesis; (R)-mevalonate biosynthesis; (R)-mevalonate from acetyl-CoA: step 3/3. Its function is as follows. HMG-CoA reductase; part of the first module of ergosterol biosynthesis pathway that includes the early steps of the pathway, conserved across all eukaryotes, and which results in the formation of mevalonate from acetyl-coenzyme A (acetyl-CoA). In this module, the cytosolic acetyl-CoA acetyltransferase catalyzes the formation of acetoacetyl-CoA. The hydroxymethylglutaryl-CoA synthase then condenses acetyl-CoA with acetoacetyl-CoA to form HMG-CoA. The rate-limiting step of the early module is the reduction to mevalonate by the 3-hydroxy-3-methylglutaryl-coenzyme A (HMG-CoA) reductase HMGR. This is 3-hydroxy-3-methylglutaryl-coenzyme A reductase from Fusarium fujikuroi (Bakanae and foot rot disease fungus).